Here is a 62-residue protein sequence, read N- to C-terminus: Cytotoxin homolog (62 aa).

Cystine bridges form between Cys-3/Cys-22, Cys-15/Cys-40, Cys-44/Cys-55, and Cys-56/Cys-61.

This sequence belongs to the three-finger toxin family. Short-chain subfamily. Orphan group XV sub-subfamily. As to expression, expressed by the venom gland.

The protein resides in the secreted. It is found in the target cell membrane. Has low cytotoxic activity. This chain is Cytotoxin homolog, found in Naja kaouthia (Monocled cobra).